The sequence spans 278 residues: Thiazole synthase (278 aa).

The active-site Schiff-base intermediate with DXP is the Lys109. 1-deoxy-D-xylulose 5-phosphate contacts are provided by residues Gly170, 197 to 198 (AG), and 219 to 220 (NT).

The protein belongs to the ThiG family. In terms of assembly, homotetramer. Forms heterodimers with either ThiH or ThiS.

It localises to the cytoplasm. It catalyses the reaction [ThiS sulfur-carrier protein]-C-terminal-Gly-aminoethanethioate + 2-iminoacetate + 1-deoxy-D-xylulose 5-phosphate = [ThiS sulfur-carrier protein]-C-terminal Gly-Gly + 2-[(2R,5Z)-2-carboxy-4-methylthiazol-5(2H)-ylidene]ethyl phosphate + 2 H2O + H(+). Its pathway is cofactor biosynthesis; thiamine diphosphate biosynthesis. Its function is as follows. Catalyzes the rearrangement of 1-deoxy-D-xylulose 5-phosphate (DXP) to produce the thiazole phosphate moiety of thiamine. Sulfur is provided by the thiocarboxylate moiety of the carrier protein ThiS. In vitro, sulfur can be provided by H(2)S. The protein is Thiazole synthase of Cupriavidus necator (strain ATCC 17699 / DSM 428 / KCTC 22496 / NCIMB 10442 / H16 / Stanier 337) (Ralstonia eutropha).